The following is a 104-amino-acid chain: Protein SMALL AUXIN UP-REGULATED RNA 9 (104 aa).

The protein belongs to the ARG7 family. Interacts with and inhibits PP2C-D subfamily of type 2C phosphatases such as PP2C67/PP2C-D1. As to expression, expressed in etiolated hypocotyls, petioles, leaves and flowers.

It localises to the cell membrane. Functionally, provide a mechanistic link between auxin and plasma membrane H(+)-ATPases (PM H(+)-ATPases, e.g. AHA1 and AHA2), and triggers PM H(+)-ATPases activity by promoting phosphorylation of their C-terminal autoinhibitory domain as a result of PP2C-D subfamily of type 2C phosphatases inhibition, thus leading to the acidification of the apoplast and the facilitation of solutes and water uptake to drive cell expansion. Triggers plant growth probably by promoting cell elongation. Regulates branch angles and bending. Probably involved in light intensity mediated root development. This chain is Protein SMALL AUXIN UP-REGULATED RNA 9, found in Arabidopsis thaliana (Mouse-ear cress).